Consider the following 120-residue polypeptide: MSAPPSGPAPDAQGGAPGQPTGPPGAPPNTTSNRRLQQTQAQVEEVVDIIRVNVDKVLERDQKLSELDDRADALQAGASQFESSAAKLKRKYWWKNCKMMIMLGGIGAIIVIVIIIYFFT.

Residues 1 to 38 form a disordered region; that stretch reads MSAPPSGPAPDAQGGAPGQPTGPPGAPPNTTSNRRLQQ. Over 1 to 98 the chain is Cytoplasmic; it reads MSAPPSGPAP…KRKYWWKNCK (98 aa). Over residues 29–38 the composition is skewed to polar residues; the sequence is NTTSNRRLQQ. The 61-residue stretch at 35–95 folds into the v-SNARE coiled-coil homology domain; it reads RLQQTQAQVE…AKLKRKYWWK (61 aa). The chain crosses the membrane as a helical; Anchor for type IV membrane protein span at residues 99-118; that stretch reads MMIMLGGIGAIIVIVIIIYF. Topologically, residues 119–120 are vesicular; it reads FT.

The protein belongs to the synaptobrevin family. As to expression, nervous system specific.

The protein resides in the cytoplasmic vesicle. It is found in the secretory vesicle. It localises to the synaptic vesicle membrane. Its subcellular location is the synapse. The protein localises to the synaptosome. Functionally, this protein may play a role in packaging, transport or release of neurotransmitters. The chain is Synaptobrevin from Tetronarce californica (Pacific electric ray).